The primary structure comprises 230 residues: Cytidylate kinase (230 aa).

12 to 20 is a binding site for ATP; the sequence is GPSGAGKGT.

Belongs to the cytidylate kinase family. Type 1 subfamily.

The protein localises to the cytoplasm. The catalysed reaction is CMP + ATP = CDP + ADP. It carries out the reaction dCMP + ATP = dCDP + ADP. In Shewanella sediminis (strain HAW-EB3), this protein is Cytidylate kinase.